We begin with the raw amino-acid sequence, 309 residues long: Taste receptor type 2 member 105 (309 aa).

At 1–9 (MLSAAEGIL) the chain is on the extracellular side. A helical membrane pass occupies residues 10 to 32 (LSIATVEAGLGVLGNTFIALVNC). At 33–44 (MDWAKNKKLSKI) the chain is on the cytoplasmic side. Residues 45–67 (GFLLFGLATSRIFIVWILILDAY) form a helical membrane-spanning segment. Residues 68-86 (AKLFFPGKYLSKSLTEIIS) are Extracellular-facing. The helical transmembrane segment at 87–109 (CIWMTVNHMTVWFATSLSIFYFL) threads the bilayer. Topologically, residues 110 to 129 (KIANFSHYIFLWLKRRTDKV) are cytoplasmic. Residues 130–149 (FAFLLWCLLISWAISFSFTV) form a helical membrane-spanning segment. At 150-177 (KVMKSNPKNHGNRTSGTHWEKREFTSNY) the chain is on the extracellular side. N-linked (GlcNAc...) asparagine glycosylation occurs at asparagine 161. The helical transmembrane segment at 178-200 (VLINIGVISLLIMTLTACFLLII) threads the bilayer. The Cytoplasmic segment spans residues 201-226 (SLWKHSRQMQSNVSGFRDLNTEAHVK). The chain crosses the membrane as a helical span at residues 227–249 (AIKFLISFIILFILYFIGVAVEI). Residues 250–258 (ICMFIPENK) lie on the Extracellular side of the membrane. Residues 259–281 (LLFIFGLTTASVYPCCHSVILIL) form a helical membrane-spanning segment. The Cytoplasmic segment spans residues 282 to 309 (TNSQLKQAFVKVLEGLKFSENGKDLRAT).

It belongs to the G-protein coupled receptor T2R family. As to expression, expressed in subsets of taste receptor cells of the tongue and palate epithelium and exclusively in gustducin-positive cells. Expressed in 15% taste bud cells in circumvallate and foliate papillae but only in 2% in fungiform papillae. Expressed in the duodenum, antrum and fundus (part of the stomach).

Its subcellular location is the membrane. Gustducin-coupled cycloheximide receptor implicated in the perception of bitter compounds in the oral cavity and the gastrointestinal tract. Signals through PLCB2 and the calcium-regulated cation channel TRPM5. The sequence is that of Taste receptor type 2 member 105 (Tas2r105) from Rattus norvegicus (Rat).